Here is a 594-residue protein sequence, read N- to C-terminus: UvrABC system protein C (594 aa).

The region spanning 14-91 is the GIY-YIG domain; the sequence is DSPGCYLHKD…IQENMPKYNI (78 aa). The UVR domain maps to 196-231; it reads DKIIDDLRSKMLEASHNQEFERAAEYRDLISGIATM.

The protein belongs to the UvrC family. As to quaternary structure, interacts with UvrB in an incision complex.

It localises to the cytoplasm. The UvrABC repair system catalyzes the recognition and processing of DNA lesions. UvrC both incises the 5' and 3' sides of the lesion. The N-terminal half is responsible for the 3' incision and the C-terminal half is responsible for the 5' incision. The polypeptide is UvrABC system protein C (Streptococcus equi subsp. zooepidemicus (strain H70)).